Consider the following 155-residue polypeptide: Transcriptional repressor NrdR (155 aa).

A zinc finger spans residues 3–34 (CPFCGNVDTQVKDSRPAEDHVAIRRRRFCPAC). An ATP-cone domain is found at 49 to 139 (LVVIKSSGKR…VYKNFQAADD (91 aa)).

This sequence belongs to the NrdR family. Zn(2+) is required as a cofactor.

Functionally, negatively regulates transcription of bacterial ribonucleotide reductase nrd genes and operons by binding to NrdR-boxes. In Dinoroseobacter shibae (strain DSM 16493 / NCIMB 14021 / DFL 12), this protein is Transcriptional repressor NrdR.